The sequence spans 288 residues: ATP synthase gamma chain (288 aa).

Belongs to the ATPase gamma chain family. F-type ATPases have 2 components, CF(1) - the catalytic core - and CF(0) - the membrane proton channel. CF(1) has five subunits: alpha(3), beta(3), gamma(1), delta(1), epsilon(1). CF(0) has three main subunits: a, b and c.

It localises to the cell membrane. Its function is as follows. Produces ATP from ADP in the presence of a proton gradient across the membrane. The gamma chain is believed to be important in regulating ATPase activity and the flow of protons through the CF(0) complex. In Staphylococcus saprophyticus subsp. saprophyticus (strain ATCC 15305 / DSM 20229 / NCIMB 8711 / NCTC 7292 / S-41), this protein is ATP synthase gamma chain.